Here is a 270-residue protein sequence, read N- to C-terminus: Bis(5'-nucleosyl)-tetraphosphatase, symmetrical (270 aa).

It belongs to the Ap4A hydrolase family.

It catalyses the reaction P(1),P(4)-bis(5'-adenosyl) tetraphosphate + H2O = 2 ADP + 2 H(+). Its function is as follows. Hydrolyzes diadenosine 5',5'''-P1,P4-tetraphosphate to yield ADP. This chain is Bis(5'-nucleosyl)-tetraphosphatase, symmetrical, found in Haemophilus ducreyi (strain 35000HP / ATCC 700724).